The sequence spans 442 residues: Terpene cyclase aneC (442 aa).

The Mg(2+) site is built by Asp-196, Asn-327, Ser-331, and Glu-335. The (2E,6E)-farnesyl diphosphate site is built by Arg-419 and Tyr-420.

The protein belongs to the terpene synthase family. In terms of assembly, homodimer. The cofactor is Mg(2+).

It carries out the reaction (2E,6E)-farnesyl diphosphate = dauca-4,7-diene + diphosphate. It functions in the pathway secondary metabolite biosynthesis. In terms of biological role, terpene cyclase; part of the gene cluster that mediates the biosynthesis of aculenes, a unique type of norsesquiterpenes that contain a nordaucane skeleton linked to an L-proline moiety and are of mixed biosynthetic origin. The pathway begins with the synthesis of dauca-4,7-diene by the terpene cyclase aneC using farnesyl pyrophosphate (FPP) as substrate. The cytochrome P450 monooxygenase aneF then performs the initial oxidation at C-12 of dauca-4,7-diene to yield asperaculane D. Asperaculane D is substrate of the cytochrome P450 monooxygenase aneD for C-10 hydroxylation to yield asperaculane E. The cytochrome P450 monooxygenase aneG then converts asperaculane E into aculene D via C-2 oxidation. The monomodular nonribosomal peptide synthtase aneB adenylates L-proline and the thiohydrolase aneE transfers this activated L-proline derivative to aculenes D and C to produce respectively aculenes B and A. The dioxygenase aneA converts aculene D into aculene C, and aculene B into aculene A by introducing the 5,6-alkene moiety. Asperculanes A, B, C and F, as well as 14-prolyl asperculane C, might be shunt products of the pathway. In Aspergillus aculeatus (strain ATCC 16872 / CBS 172.66 / WB 5094), this protein is Terpene cyclase aneC.